The primary structure comprises 422 residues: Enolase (422 aa).

Q162 serves as a coordination point for (2R)-2-phosphoglycerate. The Proton donor role is filled by E204. Residues D241, E285, and D312 each contribute to the Mg(2+) site. The (2R)-2-phosphoglycerate site is built by K337, R366, S367, and K388. The Proton acceptor role is filled by K337.

It belongs to the enolase family. Requires Mg(2+) as cofactor.

The protein localises to the cytoplasm. It localises to the secreted. The protein resides in the cell surface. The enzyme catalyses (2R)-2-phosphoglycerate = phosphoenolpyruvate + H2O. The protein operates within carbohydrate degradation; glycolysis; pyruvate from D-glyceraldehyde 3-phosphate: step 4/5. Functionally, catalyzes the reversible conversion of 2-phosphoglycerate (2-PG) into phosphoenolpyruvate (PEP). It is essential for the degradation of carbohydrates via glycolysis. The protein is Enolase of Wolinella succinogenes (strain ATCC 29543 / DSM 1740 / CCUG 13145 / JCM 31913 / LMG 7466 / NCTC 11488 / FDC 602W) (Vibrio succinogenes).